Reading from the N-terminus, the 580-residue chain is Double-stranded RNA-binding protein Staufen homolog 1 (580 aa).

Ser2 carries the post-translational modification N-acetylserine. A compositionally biased stretch (polar residues) spans 34–44; it reads SIPSTTSSLPS. The interval 34–59 is disordered; sequence SIPSTTSSLPSENAGRPIQNSALPSA. A DRBM 1 domain is found at 72 to 162; that stretch reads TPTVELNALC…AAKALRTLQS (91 aa). Position 108 is an asymmetric dimethylarginine (Arg108). Arg115 bears the Asymmetric dimethylarginine; alternate mark. Arg115 bears the Omega-N-methylarginine; alternate mark. Residues 158–189 are disordered; it reads RTLQSEPLPERPEGRRPGEQVNGRESEEENLN. Over residues 165–182 the composition is skewed to basic and acidic residues; sequence LPERPEGRRPGEQVNGRE. Ser183 carries the post-translational modification Phosphoserine. The region spanning 191–258 is the DRBM 2 domain; the sequence is SEISQVFEIA…AIAVLEELKK (68 aa). At Ser285 the chain carries Phosphoserine. The 69-residue stretch at 293 to 361 folds into the DRBM 3 domain; that stretch reads NPISRLAQIQ…AENMLEILGF (69 aa). A disordered region spans residues 367–404; the sequence is QPTKPALKSEEKTPIKKPGDGRKVTFFEPGSGDENGTS. Residues 373–391 are compositionally biased toward basic and acidic residues; it reads LKSEEKTPIKKPGDGRKVT. Ser397 carries the post-translational modification Phosphoserine.

Binds tubulin. Binds with low affinity single-stranded RNA or DNA homopolymers. Interacts with CASC3 in an RNA-dependent manner. Identified in a mRNP complex, at least composed of DHX9, DDX3X, ELAVL1, HNRNPU, IGF2BP1, ILF3, PABPC1, PCBP2, PTBP2, STAU1, STAU2, SYNCRIP and YBX1. Interacts with the influenza virus nonstructural protein NS1.

It localises to the cytoplasm. Its subcellular location is the rough endoplasmic reticulum. Its function is as follows. Binds double-stranded RNA (regardless of the sequence) and tubulin. May play a role in specific positioning of mRNAs at given sites in the cell by cross-linking cytoskeletal and RNA components, and in stimulating their translation at the site. In Ailuropoda melanoleuca (Giant panda), this protein is Double-stranded RNA-binding protein Staufen homolog 1 (STAU1).